The primary structure comprises 209 residues: LexA repressor (209 aa).

The H-T-H motif DNA-binding region spans Val-29–Asp-49. Residues Ser-130 and Lys-168 each act as for autocatalytic cleavage activity in the active site.

The protein belongs to the peptidase S24 family. As to quaternary structure, homodimer.

It catalyses the reaction Hydrolysis of Ala-|-Gly bond in repressor LexA.. Its function is as follows. Represses a number of genes involved in the response to DNA damage (SOS response), including recA and lexA. In the presence of single-stranded DNA, RecA interacts with LexA causing an autocatalytic cleavage which disrupts the DNA-binding part of LexA, leading to derepression of the SOS regulon and eventually DNA repair. This chain is LexA repressor, found in Pediococcus pentosaceus (strain ATCC 25745 / CCUG 21536 / LMG 10740 / 183-1w).